The primary structure comprises 169 residues: Cytochrome c oxidase subunit 4 isoform 1, mitochondrial (169 aa).

Residues 1-22 (MLATRVFSLIGRRAISTSVCVR) constitute a mitochondrion transit peptide. Residues 23-98 (AHGSVVKSED…SFAEMNRSTN (76 aa)) lie on the Mitochondrial matrix side of the membrane. Lys-29 bears the N6-acetyllysine; alternate mark. Lys-29 is subject to N6-succinyllysine; alternate. N6-acetyllysine is present on Lys-53. Phosphoserine occurs at positions 56 and 58. Lys-60 is modified (N6-acetyllysine; alternate). Position 60 is an N6-succinyllysine; alternate (Lys-60). Lys-67 carries the post-translational modification N6-acetyllysine. The helical transmembrane segment at 99-124 (EWKTVVGAAMFFIGFTALLLIWEKHY) threads the bilayer. At 125-169 (VYGPIPHTFEEEWVAKQTKRMLDMKVAPIQGFSAKWDYDKNEWKK) the chain is on the mitochondrial intermembrane side.

Belongs to the cytochrome c oxidase IV family. Component of the cytochrome c oxidase (complex IV, CIV), a multisubunit enzyme composed of 14 subunits. The complex is composed of a catalytic core of 3 subunits MT-CO1, MT-CO2 and MT-CO3, encoded in the mitochondrial DNA, and 11 supernumerary subunits COX4I1 (or COX4I2), COX5A, COX5B, COX6A2 (or COX6A1), COX6B1 (or COX6B2), COX6C, COX7A1 (or COX7A2), COX7B, COX7C, COX8B and NDUFA4, which are encoded in the nuclear genome. The complex exists as a monomer or a dimer and forms supercomplexes (SCs) in the inner mitochondrial membrane with NADH-ubiquinone oxidoreductase (complex I, CI) and ubiquinol-cytochrome c oxidoreductase (cytochrome b-c1 complex, complex III, CIII), resulting in different assemblies (supercomplex SCI(1)III(2)IV(1) and megacomplex MCI(2)III(2)IV(2)). Interacts with PHB2; the interaction decreases in absence of SPHK2. Interacts with AFG1L. Interacts with ABCB7; this interaction allows the regulation of cellular iron homeostasis and cellular reactive oxygen species (ROS) levels in cardiomyocytes. Interacts with FLVCR2; this interaction occurs in the absence of heme and is disrupted upon heme binding. Interacts with IRGC.

The protein localises to the mitochondrion inner membrane. It functions in the pathway energy metabolism; oxidative phosphorylation. Its function is as follows. Component of the cytochrome c oxidase, the last enzyme in the mitochondrial electron transport chain which drives oxidative phosphorylation. The respiratory chain contains 3 multisubunit complexes succinate dehydrogenase (complex II, CII), ubiquinol-cytochrome c oxidoreductase (cytochrome b-c1 complex, complex III, CIII) and cytochrome c oxidase (complex IV, CIV), that cooperate to transfer electrons derived from NADH and succinate to molecular oxygen, creating an electrochemical gradient over the inner membrane that drives transmembrane transport and the ATP synthase. Cytochrome c oxidase is the component of the respiratory chain that catalyzes the reduction of oxygen to water. Electrons originating from reduced cytochrome c in the intermembrane space (IMS) are transferred via the dinuclear copper A center (CU(A)) of subunit 2 and heme A of subunit 1 to the active site in subunit 1, a binuclear center (BNC) formed by heme A3 and copper B (CU(B)). The BNC reduces molecular oxygen to 2 water molecules using 4 electrons from cytochrome c in the IMS and 4 protons from the mitochondrial matrix. The chain is Cytochrome c oxidase subunit 4 isoform 1, mitochondrial (COX4I1) from Bos taurus (Bovine).